The chain runs to 111 residues: MLSLLLLLLGLGSVFSAVISQKPSRDICQRGTSLTIQCQVDSQVTMMFWYRQQPGQSLTLIATANQGSEATYESGFVIDKFPISRPNLTFSTLTVSNMSPEDSSIYLCSVE.

An N-terminal signal peptide occupies residues 1–16 (MLSLLLLLLGLGSVFS). In terms of domain architecture, Ig-like spans 17 to 111 (AVISQKPSRD…DSSIYLCSVE (95 aa)). C38 and C108 form a disulfide bridge. A glycan (N-linked (GlcNAc...) asparagine) is linked at N87.

As to quaternary structure, alpha-beta TR is a heterodimer composed of an alpha and beta chain; disulfide-linked. The alpha-beta TR is associated with the transmembrane signaling CD3 coreceptor proteins to form the TR-CD3 (TcR or TCR). The assembly of alpha-beta TR heterodimers with CD3 occurs in the endoplasmic reticulum where a single alpha-beta TR heterodimer associates with one CD3D-CD3E heterodimer, one CD3G-CD3E heterodimer and one CD247 homodimer forming a stable octameric structure. CD3D-CD3E and CD3G-CD3E heterodimers preferentially associate with TR alpha and TR beta chains, respectively. The association of the CD247 homodimer is the last step of TcR assembly in the endoplasmic reticulum and is required for transport to the cell surface.

The protein resides in the cell membrane. In terms of biological role, v region of the variable domain of T cell receptor (TR) beta chain that participates in the antigen recognition. Alpha-beta T cell receptors are antigen specific receptors which are essential to the immune response and are present on the cell surface of T lymphocytes. Recognize peptide-major histocompatibility (MH) (pMH) complexes that are displayed by antigen presenting cells (APC), a prerequisite for efficient T cell adaptive immunity against pathogens. Binding of alpha-beta TR to pMH complex initiates TR-CD3 clustering on the cell surface and intracellular activation of LCK that phosphorylates the ITAM motifs of CD3G, CD3D, CD3E and CD247 enabling the recruitment of ZAP70. In turn ZAP70 phosphorylates LAT, which recruits numerous signaling molecules to form the LAT signalosome. The LAT signalosome propagates signal branching to three major signaling pathways, the calcium, the mitogen-activated protein kinase (MAPK) kinase and the nuclear factor NF-kappa-B (NF-kB) pathways, leading to the mobilization of transcription factors that are critical for gene expression and essential for T cell growth and differentiation. The T cell repertoire is generated in the thymus, by V-(D)-J rearrangement. This repertoire is then shaped by intrathymic selection events to generate a peripheral T cell pool of self-MH restricted, non-autoaggressive T cells. Post-thymic interaction of alpha-beta TR with the pMH complexes shapes TR structural and functional avidity. This Homo sapiens (Human) protein is T cell receptor beta variable 29-1.